The primary structure comprises 306 residues: Putative HPr kinase/phosphorylase 2 (306 aa).

Residues histidine 138 and lysine 159 contribute to the active site. An ATP-binding site is contributed by 153-160 (GESGVGKS). Mg(2+) is bound at residue serine 160. Catalysis depends on aspartate 177, which acts as the Proton acceptor; for phosphorylation activity. Proton donor; for dephosphorylation activity. Residues 201–210 (LALRSVGLLN) are important for the catalytic mechanism of both phosphorylation and dephosphorylation. The tract at residues 264-269 (QLQPGR) is important for the catalytic mechanism of dephosphorylation.

This sequence belongs to the HPrK/P family. In terms of assembly, homohexamer. Mg(2+) serves as cofactor.

It carries out the reaction [HPr protein]-L-serine + ATP = [HPr protein]-O-phospho-L-serine + ADP + H(+). The catalysed reaction is [HPr protein]-O-phospho-L-serine + phosphate + H(+) = [HPr protein]-L-serine + diphosphate. In terms of biological role, catalyzes the ATP- as well as the pyrophosphate-dependent phosphorylation of a specific serine residue in HPr, a phosphocarrier protein of the phosphoenolpyruvate-dependent sugar phosphotransferase system (PTS). HprK/P also catalyzes the pyrophosphate-producing, inorganic phosphate-dependent dephosphorylation (phosphorolysis) of seryl-phosphorylated HPr (P-Ser-HPr). The two antagonistic activities of HprK/P are regulated by several intracellular metabolites, which change their concentration in response to the absence or presence of rapidly metabolisable carbon sources (glucose, fructose, etc.) in the growth medium. Also phosphorylates/dephosphorylates the HPr-like catabolite repression protein crh on a specific serine residue. Therefore, by controlling the phosphorylation state of HPr and crh, HPrK/P is a sensor enzyme that plays a major role in the regulation of carbon metabolism and sugar transport: it mediates carbon catabolite repression (CCR), and regulates PTS-catalyzed carbohydrate uptake and inducer exclusion. This Oceanobacillus iheyensis (strain DSM 14371 / CIP 107618 / JCM 11309 / KCTC 3954 / HTE831) protein is Putative HPr kinase/phosphorylase 2 (hprK2).